Consider the following 219-residue polypeptide: Thiopurine S-methyltransferase (219 aa).

Residues W10, L45, E66, and R123 each coordinate S-adenosyl-L-methionine.

Belongs to the class I-like SAM-binding methyltransferase superfamily. TPMT family.

It localises to the cytoplasm. It catalyses the reaction S-adenosyl-L-methionine + a thiopurine = S-adenosyl-L-homocysteine + a thiopurine S-methylether.. This Bordetella pertussis (strain Tohama I / ATCC BAA-589 / NCTC 13251) protein is Thiopurine S-methyltransferase.